The primary structure comprises 718 residues: Scarecrow-like protein 9 (718 aa).

The tract at residues 305-338 (VEKKKASDAQGGKRRARGRGRGRGRGGGGGQNGK) is disordered. The segment covering 316-328 (GKRRARGRGRGRG) has biased composition (basic residues). Residues 335 to 713 (QNGKKEVVDL…RTVMALSVWK (379 aa)) form the GRAS domain. The interval 342–402 (VDLRSLLIHC…EARLAGTGSQ (61 aa)) is leucine repeat I (LRI). Positions 421–484 (HQLFLACCPF…YGSPKVRITG (64 aa)) are VHIID. The VHIID motif lies at 452–456 (VHVID). Residues 500–532 (ETGQRLAAYAKLFGVPFEYKAIAKKWDAIQLED) form a leucine repeat II (LRII) region. Positions 541–635 (TVVNCLYRAE…MEVFGREALN (95 aa)) are PFYRE. The segment at 638–713 (ACEGWERVER…RTVMALSVWK (76 aa)) is SAW.

It belongs to the GRAS family. In terms of tissue distribution, expressed in cotyledons, leaves and flowers, and in the elongation zone in root.

It is found in the nucleus. Functionally, probable transcription factor involved in plant development. This Arabidopsis thaliana (Mouse-ear cress) protein is Scarecrow-like protein 9 (SCL9).